Consider the following 407-residue polypeptide: Peptidase T (407 aa).

A Zn(2+)-binding site is contributed by His82. Asp84 is an active-site residue. Asp143 lines the Zn(2+) pocket. Glu177 (proton acceptor) is an active-site residue. Zn(2+) is bound by residues Glu178, Asp200, and His382.

Belongs to the peptidase M20B family. The cofactor is Zn(2+).

It localises to the cytoplasm. It catalyses the reaction Release of the N-terminal residue from a tripeptide.. Cleaves the N-terminal amino acid of tripeptides. The chain is Peptidase T from Streptococcus pyogenes serotype M3 (strain ATCC BAA-595 / MGAS315).